We begin with the raw amino-acid sequence, 394 residues long: Phosphorylated adapter RNA export protein (394 aa).

A compositionally biased stretch (acidic residues) spans 1-18 (MALEVGDMEDGQLSDSDS). The tract at residues 1-33 (MALEVGDMEDGQLSDSDSDMTVAPSDRPLQLPK) is disordered. Residue Ala-2 is modified to N-acetylalanine. The tract at residues 2 to 329 (ALEVGDMEDG…KAARKRRTQV (328 aa)) is necessary for interaction with CBP80. Ser-14, Ser-16, Ser-65, Ser-66, Ser-69, and Ser-73 each carry phosphoserine. Positions 81–84 (KRKR) match the Nuclear localization signal motif. Positions 83-111 (KRQKCFNPPPKPEPFQFGQSSQKPPVAGG) are disordered. The Nuclear export signal motif lies at 130 to 139 (VATELGILGM). Basic and acidic residues predominate over residues 183-193 (KKMGSKEEENG). Residues 183–211 (KKMGSKEEENGQGHLKRKRPVKDRLGNRP) are disordered. The Nuclear localization signal motif lies at 198-201 (KRKR). Phosphoserine is present on Ser-226. Residues 228 to 328 (EKVADEISFR…KKAARKRRTQ (101 aa)) are sufficient for poly U RNA-binding. The segment at 279–287 (GSRRRTPGG) is necessary for poly U RNA-binding and snRNA export. Thr-296 is modified (phosphothreonine). 2 positions are modified to phosphoserine: Ser-356 and Ser-368.

Belongs to the PHAX family. As to quaternary structure, found in a U snRNA export complex with PHAX/RNUXA, NCBP1/CBP80, NCBP2/CBP20, RAN, XPO1 and m7G-capped RNA. Part of a precomplex with PHAX/RNUXA, NCBP1/CBP80, NCBP2/CBP20 and m7G-capped RNA. Interacts with NCBP1/CBP80. Found in a complex with snoRNA. Interacts with NCBP2/CBP20. Interacts with DDX39A; this interaction stimulates PHAX RNA binding activity. Phosphorylated in the nucleus. Dephosphorylated in the cytoplasm.

Its subcellular location is the nucleus. The protein resides in the nucleoplasm. It localises to the cajal body. The protein localises to the cytoplasm. Functionally, a phosphoprotein adapter involved in the XPO1-mediated U snRNA export from the nucleus. Bridge components required for U snRNA export, the cap binding complex (CBC)-bound snRNA on the one hand and the GTPase Ran in its active GTP-bound form together with the export receptor XPO1 on the other. Its phosphorylation in the nucleus is required for U snRNA export complex assembly and export, while its dephosphorylation in the cytoplasm causes export complex disassembly. It is recycled back to the nucleus via the importin alpha/beta heterodimeric import receptor. The directionality of nuclear export is thought to be conferred by an asymmetric distribution of the GTP- and GDP-bound forms of Ran between the cytoplasm and nucleus. Its compartmentalized phosphorylation cycle may also contribute to the directionality of export. Binds strongly to m7G-capped U1 and U5 small nuclear RNAs (snRNAs) in a sequence-unspecific manner and phosphorylation-independent manner. Also plays a role in the biogenesis of U3 small nucleolar RNA (snoRNA). Involved in the U3 snoRNA transport from nucleoplasm to Cajal bodies. Binds strongly to m7G-capped U3, U8 and U13 precursor snoRNAs and weakly to trimethylated (TMG)-capped U3, U8 and U13 snoRNAs. Also binds to telomerase RNA. The sequence is that of Phosphorylated adapter RNA export protein (PHAX) from Homo sapiens (Human).